The sequence spans 534 residues: H(+)/hexose cotransporter 1 (534 aa).

Topologically, residues 1–21 are cytoplasmic; sequence MAGGGVVVVSGRGLSTGDYRG. Residues 22-42 traverse the membrane as a helical segment; it reads GLTVYVVMVAFMAACGGLLLG. Residues 43-87 lie on the Extracellular side of the membrane; it reads YDNGVTGGVVSLEAFEKKFFPDVWAKKQEVHEDSPYCTYDNAKLQ. Residues 88–108 form a helical membrane-spanning segment; it reads LFVSSLFLAGLVSCLFASWIT. Over 109–114 the chain is Cytoplasmic; it reads RNWGRK. A helical membrane pass occupies residues 115–135; sequence VTMGIGGAFFVAGGLVNAFAQ. The Extracellular portion of the chain corresponds to 136 to 144; it reads DMAMLIVGR. Residues 145 to 165 form a helical membrane-spanning segment; the sequence is VLLGFGVGLGSQVVPQYLSEV. Residues 166 to 173 are Cytoplasmic-facing; it reads APFSHRGM. A helical membrane pass occupies residues 174–194; it reads LNIGYQLFVTIGILIAGLVNY. Topologically, residues 195–204 are extracellular; that stretch reads AVRDWENGWR. Residues 205–225 form a helical membrane-spanning segment; sequence LSLGPAAAPGAILFLGSLVLP. Residues 226-299 lie on the Cytoplasmic side of the membrane; that stretch reads ESPNFLVEKG…TSFVIQFFQQ (74 aa). Residues 300–322 form a helical membrane-spanning segment; that stretch reads FTGINAIIFYVPVLFSSLGSANS. The Extracellular segment spans residues 323–328; it reads AALLNT. Residues 329–349 traverse the membrane as a helical segment; it reads VVVGAVNVGSTLIAVMFSDKF. At 350–352 the chain is on the cytoplasmic side; the sequence is GRR. Residues 353–373 traverse the membrane as a helical segment; it reads FLLIEGGIQCCLAMLTTGVVL. The Extracellular portion of the chain corresponds to 374–387; sequence AIEFAKYGTDPLPK. The chain crosses the membrane as a helical span at residues 388 to 408; that stretch reads AVASGILAVICIFISGFAWSW. Residues 409–433 are Cytoplasmic-facing; that stretch reads GPMGWLIPSEIFTLETRPAGTAVAV. A helical transmembrane segment spans residues 434–454; that stretch reads VGNFLFSFVIGQAFVSMLCAM. The Extracellular segment spans residues 455–456; it reads EY. Residues 457 to 477 form a helical membrane-spanning segment; the sequence is GVFLFFAGWLVIMVLCAIFLL. Residues 478–534 are Cytoplasmic-facing; the sequence is PETKGVPIERVQALYARHWFWNRVMGPAAAEVIAEDEKRVAAASAIIKEEELSKAMK.

It belongs to the major facilitator superfamily. Sugar transporter (TC 2.A.1.1) family.

The protein resides in the membrane. Functionally, active uptake of hexoses. This chain is H(+)/hexose cotransporter 1 (HUP1), found in Parachlorella kessleri (Green alga).